Consider the following 98-residue polypeptide: uncharacterized protein (98 aa).

Belongs to the Rv1128c/1148c/1588c/1702c/1945/3466 family.

This is an uncharacterized protein from Mycobacterium tuberculosis (strain ATCC 25618 / H37Rv).